The primary structure comprises 392 residues: Esterase EstB (392 aa).

The active-site Acyl-ester intermediate is the serine 75.

It belongs to the class-A beta-lactamase family.

The protein resides in the cytoplasm. With respect to regulation, strongly inhibited by eserin, NaF, HgCl2, SDS and Triton X-100. Functionally, acts on short-chain (C4-C6) fatty acid esters and triglycerides, including tertiary alcohol esters. Activity on p-nitrophenyl esters is generally higher than on o-nitrophenyl esters. Lacks beta-lactamase activity; it hydrolyzes the ester bond of cephalosporin substrates but there is no opening of the beta-lactam ring observed. The sequence is that of Esterase EstB (estB) from Burkholderia gladioli (Pseudomonas marginata).